The following is a 535-amino-acid chain: UDP-glycosyltransferase stmC (535 aa).

N-linked (GlcNAc...) asparagine glycans are attached at residues N70 and N422. Residues 506–526 form a helical membrane-spanning segment; sequence ASNLDLYIVCIAFVAVPVGVA.

It belongs to the glycosyltransferase 28 family.

Its subcellular location is the membrane. It catalyses the reaction stromemycin aglycone + UDP-alpha-D-glucose = stromemycin + UDP + H(+). The catalysed reaction is exophillate aglycone + UDP-alpha-D-glucose = exophillate + UDP + H(+). The protein operates within mycotoxin biosynthesis. Functionally, UDP-glycosyltransferase; part of the gene cluster that mediates the biosynthesis of stromemycin, a depside C-glucoside with two unsaturated C9 side chains belonging to aromatic polyketide glycosides. Acts as the tailoring enzyme responsible for 3-C-glucosylation of bininalkenylresorcylic acid produced by the combined action of the HR-PKS stmA and the NR-PKS stmB to yield stromemycin. Possesses a relatively strict acceptor specificity towards bininalkenylresorcylic acid for C-glycosylation, but is able to use several donors including UDP-alpha-D-galactose, UDP-alpha-D-xylose, UDP-alpha-D-4-keto-6-deoxyglucose, UDP-alpha-D-quinovose, and UDP-beta-L-rhamnose. In Aspergillus ustus, this protein is UDP-glycosyltransferase stmC.